Reading from the N-terminus, the 468-residue chain is Aspartate ammonia-lyase (468 aa).

L-aspartate is bound by residues threonine 99, serine 138, threonine 139, asparagine 140, and threonine 185. The segment at 315 to 324 is SS loop; that stretch reads GSSIMPGKVN. The Proton acceptor role is filled by serine 316. L-aspartate contacts are provided by serine 317 and lysine 322.

Belongs to the class-II fumarase/aspartase family. Aspartase subfamily. Homotetramer.

The catalysed reaction is L-aspartate = fumarate + NH4(+). Functionally, catalyzes the reversible conversion of L-aspartate to fumarate and ammonia. The protein is Aspartate ammonia-lyase (aspA) of Helicobacter pylori (strain J99 / ATCC 700824) (Campylobacter pylori J99).